The following is a 386-amino-acid chain: Homeobox protein Hox-A13 (386 aa).

The homeobox DNA-binding region spans 320–379; the sequence is GRKKRVPYTKVQLKELEREYATNKFITKDKRRRISATTNLSERQVTIWFQNRRVKEKKVI.

The protein belongs to the Abd-B homeobox family. Binds DNA as a homodimer. Interacts with MEIS1, MEIS2 and MEIS3.

Its subcellular location is the nucleus. Sequence-specific, AT-rich binding transcription factor which is part of a developmental regulatory system that provides cells with specific positional identities on the anterior-posterior axis. The sequence is that of Homeobox protein Hox-A13 (Hoxa13) from Mus musculus (Mouse).